Consider the following 143-residue polypeptide: Deoxyuridine 5'-triphosphate nucleotidohydrolase (143 aa).

Belongs to the dUTPase family. Mg(2+) is required as a cofactor.

The enzyme catalyses dUTP + H2O = dUMP + diphosphate + H(+). Functionally, this enzyme is involved in nucleotide metabolism: it produces dUMP, the immediate precursor of thymidine nucleotides and it decreases the intracellular concentration of dUTP so that uracil cannot be incorporated into DNA. The sequence is that of Deoxyuridine 5'-triphosphate nucleotidohydrolase (DUT) from Yaba monkey tumor virus (strain VR587) (YMTV).